Here is a 98-residue protein sequence, read N- to C-terminus: NADH-ubiquinone oxidoreductase chain 4L (98 aa).

2 helical membrane-spanning segments follow: residues 26–46 (LVAS…MATL) and 61–81 (IILL…LISI).

This sequence belongs to the complex I subunit 4L family. As to quaternary structure, core subunit of respiratory chain NADH dehydrogenase (Complex I) which is composed of 45 different subunits.

It localises to the mitochondrion inner membrane. The catalysed reaction is a ubiquinone + NADH + 5 H(+)(in) = a ubiquinol + NAD(+) + 4 H(+)(out). Its function is as follows. Core subunit of the mitochondrial membrane respiratory chain NADH dehydrogenase (Complex I) which catalyzes electron transfer from NADH through the respiratory chain, using ubiquinone as an electron acceptor. Part of the enzyme membrane arm which is embedded in the lipid bilayer and involved in proton translocation. This is NADH-ubiquinone oxidoreductase chain 4L (MT-ND4L) from Macaca nigrescens (Gorontalo macaque).